A 292-amino-acid polypeptide reads, in one-letter code: 6-phospho-5-dehydro-2-deoxy-D-gluconate aldolase (292 aa).

Aspartate 85 serves as the catalytic Proton donor. Zn(2+) is bound by residues histidine 86 and histidine 180. Position 181 (glycine 181) interacts with dihydroxyacetone phosphate. Residue histidine 208 coordinates Zn(2+). Residues 209-211 (GAS) and 230-233 (NINT) each bind dihydroxyacetone phosphate. Phosphothreonine is present on threonine 233.

This sequence belongs to the class II fructose-bisphosphate aldolase family. IolJ subfamily. Requires Zn(2+) as cofactor.

It catalyses the reaction 6-phospho-5-dehydro-2-deoxy-D-gluconate = 3-oxopropanoate + dihydroxyacetone phosphate. The protein operates within polyol metabolism; myo-inositol degradation into acetyl-CoA; acetyl-CoA from myo-inositol: step 6/7. Its function is as follows. Produces dihydroxyacetone phosphate (DHAP or glycerone phosphate) and malonic semialdehyde (MSA or 3-oxopropanoate) from 6-phospho-5-dehydro-2-deoxy-D-gluconate (DKGP). The chain is 6-phospho-5-dehydro-2-deoxy-D-gluconate aldolase (iolJ) from Bacillus licheniformis (strain ATCC 14580 / DSM 13 / JCM 2505 / CCUG 7422 / NBRC 12200 / NCIMB 9375 / NCTC 10341 / NRRL NRS-1264 / Gibson 46).